Here is a 312-residue protein sequence, read N- to C-terminus: uncharacterized protein (312 aa).

This is an uncharacterized protein from Escherichia coli O157:H7.